Consider the following 535-residue polypeptide: CTP synthase (535 aa).

The segment at 1-267 (MTKYIFVTGG…DQIVCDHLKL (267 aa)) is amidoligase domain. S13 is a binding site for CTP. Position 13 (S13) interacts with UTP. 14-19 (SLGKGI) contributes to the ATP binding site. Y54 is an L-glutamine binding site. D71 serves as a coordination point for ATP. Positions 71 and 141 each coordinate Mg(2+). CTP-binding positions include 148 to 150 (DIE), 188 to 193 (KTKPTQ), and K224. UTP contacts are provided by residues 188–193 (KTKPTQ) and K224. 240 to 242 (RDA) contributes to the ATP binding site. The 243-residue stretch at 292–534 (KIALVGKYVE…VKASLTNKES (243 aa)) folds into the Glutamine amidotransferase type-1 domain. G354 is a binding site for L-glutamine. C381 (nucleophile; for glutamine hydrolysis) is an active-site residue. Residues 382-385 (LGMQ), E405, and R462 each bind L-glutamine. Active-site residues include H507 and E509.

This sequence belongs to the CTP synthase family. As to quaternary structure, homotetramer.

The catalysed reaction is UTP + L-glutamine + ATP + H2O = CTP + L-glutamate + ADP + phosphate + 2 H(+). The enzyme catalyses L-glutamine + H2O = L-glutamate + NH4(+). It catalyses the reaction UTP + NH4(+) + ATP = CTP + ADP + phosphate + 2 H(+). The protein operates within pyrimidine metabolism; CTP biosynthesis via de novo pathway; CTP from UDP: step 2/2. Allosterically activated by GTP, when glutamine is the substrate; GTP has no effect on the reaction when ammonia is the substrate. The allosteric effector GTP functions by stabilizing the protein conformation that binds the tetrahedral intermediate(s) formed during glutamine hydrolysis. Inhibited by the product CTP, via allosteric rather than competitive inhibition. Functionally, catalyzes the ATP-dependent amination of UTP to CTP with either L-glutamine or ammonia as the source of nitrogen. Regulates intracellular CTP levels through interactions with the four ribonucleotide triphosphates. In Bacillus anthracis (strain A0248), this protein is CTP synthase.